A 401-amino-acid chain; its full sequence is Tyrosine--tRNA ligase (401 aa).

Residues 42 to 51 (PTAPDIHLGH) carry the 'HIGH' region motif. Positions 226–230 (KMSKS) match the 'KMSKS' region motif. An ATP-binding site is contributed by K229. The 61-residue stretch at 334 to 394 (MGLATLLKEA…GKRKFARVRL (61 aa)) folds into the S4 RNA-binding domain.

Belongs to the class-I aminoacyl-tRNA synthetase family. TyrS type 2 subfamily. As to quaternary structure, homodimer.

It localises to the cytoplasm. It catalyses the reaction tRNA(Tyr) + L-tyrosine + ATP = L-tyrosyl-tRNA(Tyr) + AMP + diphosphate + H(+). In terms of biological role, catalyzes the attachment of tyrosine to tRNA(Tyr) in a two-step reaction: tyrosine is first activated by ATP to form Tyr-AMP and then transferred to the acceptor end of tRNA(Tyr). This chain is Tyrosine--tRNA ligase, found in Haemophilus influenzae (strain ATCC 51907 / DSM 11121 / KW20 / Rd).